The chain runs to 433 residues: tRNA-2-methylthio-N(6)-dimethylallyladenosine synthase (433 aa).

Residues 3–118 (KKLFIQTLGC…ISTAVKTPKF (116 aa)) enclose the MTTase N-terminal domain. 6 residues coordinate [4Fe-4S] cluster: cysteine 12, cysteine 49, cysteine 81, cysteine 150, cysteine 154, and cysteine 157. The Radical SAM core domain maps to 136 to 369 (RGSPYKSHIN…QSRHNEILDE (234 aa)). Residues 372–433 (AAQEGKILDV…RMVLYGELAN (62 aa)) form the TRAM domain.

It belongs to the methylthiotransferase family. MiaB subfamily. In terms of assembly, monomer. [4Fe-4S] cluster is required as a cofactor.

It localises to the cytoplasm. It carries out the reaction N(6)-dimethylallyladenosine(37) in tRNA + (sulfur carrier)-SH + AH2 + 2 S-adenosyl-L-methionine = 2-methylsulfanyl-N(6)-dimethylallyladenosine(37) in tRNA + (sulfur carrier)-H + 5'-deoxyadenosine + L-methionine + A + S-adenosyl-L-homocysteine + 2 H(+). Functionally, catalyzes the methylthiolation of N6-(dimethylallyl)adenosine (i(6)A), leading to the formation of 2-methylthio-N6-(dimethylallyl)adenosine (ms(2)i(6)A) at position 37 in tRNAs that read codons beginning with uridine. This chain is tRNA-2-methylthio-N(6)-dimethylallyladenosine synthase, found in Campylobacter curvus (strain 525.92).